Consider the following 102-residue polypeptide: Large ribosomal subunit protein bL21 (102 aa).

It belongs to the bacterial ribosomal protein bL21 family. Part of the 50S ribosomal subunit. Contacts protein L20.

This protein binds to 23S rRNA in the presence of protein L20. This is Large ribosomal subunit protein bL21 from Clavibacter sepedonicus (Clavibacter michiganensis subsp. sepedonicus).